Reading from the N-terminus, the 711-residue chain is DNA topoisomerase 3 (711 aa).

The Toprim domain occupies 2-135 (KSLILAEKPS…IRRLWISSVT (134 aa)). 2 residues coordinate Mg(2+): Glu8 and Asp104. Residues 152 to 580 (YNDLYYAALA…EMKDFTKDVV (429 aa)) enclose the Topo IA-type catalytic domain. The interaction with DNA stretch occupies residues 186–191 (SLGRVQ). Tyr305 functions as the O-(5'-phospho-DNA)-tyrosine intermediate in the catalytic mechanism. The segment at 691-711 (MNKNEGLDNNPFKDALKNLNL) is disordered.

This sequence belongs to the type IA topoisomerase family. Mg(2+) serves as cofactor.

It carries out the reaction ATP-independent breakage of single-stranded DNA, followed by passage and rejoining.. Its function is as follows. Releases the supercoiling and torsional tension of DNA, which is introduced during the DNA replication and transcription, by transiently cleaving and rejoining one strand of the DNA duplex. Introduces a single-strand break via transesterification at a target site in duplex DNA. The scissile phosphodiester is attacked by the catalytic tyrosine of the enzyme, resulting in the formation of a DNA-(5'-phosphotyrosyl)-enzyme intermediate and the expulsion of a 3'-OH DNA strand. The free DNA strand then undergoes passage around the unbroken strand, thus removing DNA supercoils. Finally, in the religation step, the DNA 3'-OH attacks the covalent intermediate to expel the active-site tyrosine and restore the DNA phosphodiester backbone. The sequence is that of DNA topoisomerase 3 from Staphylococcus aureus (strain NCTC 8325 / PS 47).